The sequence spans 618 residues: 1-deoxy-D-xylulose-5-phosphate synthase (618 aa).

Residues histidine 70 and 111 to 113 (GHS) contribute to the thiamine diphosphate site. Residue aspartate 142 coordinates Mg(2+). Thiamine diphosphate-binding positions include 143–144 (GS), asparagine 171, tyrosine 278, and glutamate 360. Asparagine 171 serves as a coordination point for Mg(2+).

This sequence belongs to the transketolase family. DXPS subfamily. In terms of assembly, homodimer. The cofactor is Mg(2+). It depends on thiamine diphosphate as a cofactor.

The catalysed reaction is D-glyceraldehyde 3-phosphate + pyruvate + H(+) = 1-deoxy-D-xylulose 5-phosphate + CO2. The protein operates within metabolic intermediate biosynthesis; 1-deoxy-D-xylulose 5-phosphate biosynthesis; 1-deoxy-D-xylulose 5-phosphate from D-glyceraldehyde 3-phosphate and pyruvate: step 1/1. Its function is as follows. Catalyzes the acyloin condensation reaction between C atoms 2 and 3 of pyruvate and glyceraldehyde 3-phosphate to yield 1-deoxy-D-xylulose-5-phosphate (DXP). The polypeptide is 1-deoxy-D-xylulose-5-phosphate synthase (Helicobacter pylori (strain J99 / ATCC 700824) (Campylobacter pylori J99)).